Reading from the N-terminus, the 751-residue chain is Phosphate transporter PHO1 homolog 8 (751 aa).

Positions 1–299 (MKFGKEYVAQ…LRNAAKLYME (299 aa)) constitute an SPX domain. Residues 1–351 (MKFGKEYVAQ…KVTKEKHRIT (351 aa)) are Cytoplasmic-facing. The helical transmembrane segment at 352-372 (FSTGFFVGCTVSLVIALGLFI) threads the bilayer. Residues 373-392 (HARNIMGAVGHKLYMETMFP) are Extracellular-facing. The helical transmembrane segment at 393-413 (LYSLFAFVVLHMIMYASNIYF) threads the bilayer. Residues 414-434 (WKRYRVNYPFIFGFKEGTELG) are Cytoplasmic-facing. A helical transmembrane segment spans residues 435-455 (YGHVLLLSFGLGTLALCAVLV). Residues 456–473 (NMDMEMDPNTNDYKTITE) lie on the Extracellular side of the membrane. A helical transmembrane segment spans residues 474-494 (LVPLFVVALVIAISVCPFNIF). Over 495–623 (YRSSRFFFLM…FSINRGNDWK (129 aa)) the chain is Cytoplasmic. The EXS domain occupies 558–751 (KSSDVYSTFY…NYDEEEDRDS (194 aa)). A helical membrane pass occupies residues 624–644 (IAAWVFSGLATFYGTYWDIVY). Over 645 to 667 (DWGLLHRPSKSWLREKLLVPHKS) the chain is Extracellular. Residues 668–688 (VYYVAMVVNVVLRLAWLQTVL) traverse the membrane as a helical segment. The Cytoplasmic portion of the chain corresponds to 689 to 751 (DFNISFLHRE…NYDEEEDRDS (63 aa)).

It belongs to the SYG1 (TC 2.A.94) family. In terms of tissue distribution, expressed in root epidermis, leaf hydathodes, trichomes and petioles, stem vascular cylinder, receptacle, stigma apex and pollen grains.

It localises to the cell membrane. Its function is as follows. May transport inorganic phosphate (Pi). The chain is Phosphate transporter PHO1 homolog 8 (PHO1-H8) from Arabidopsis thaliana (Mouse-ear cress).